The primary structure comprises 30 residues: MKNKSLFEVIKIGKVEVXXKIXMAVMGAFG.

In terms of assembly, dodecamer; tetramer of trimers. Iron-sulfur cluster is required as a cofactor. Requires FAD as cofactor. It depends on FMN as a cofactor.

The catalysed reaction is butanoate + NAD(+) = (2E)-2-butenoate + NADH + H(+). Its function is as follows. Involved in fermentation of amino acids (Stickland reaction) such as leucine, isoleucine, valine and phenylalanine. The sequence is that of 2-enoate reductase from Clostridium tyrobutyricum.